The primary structure comprises 89 residues: Signal recognition particle 19 kDa protein (89 aa).

Belongs to the SRP19 family. As to quaternary structure, part of the signal recognition particle protein translocation system, which is composed of SRP and FtsY. Archaeal SRP consists of a 7S RNA molecule of 300 nucleotides and two protein subunits: SRP54 and SRP19.

It localises to the cytoplasm. In terms of biological role, involved in targeting and insertion of nascent membrane proteins into the cytoplasmic membrane. Binds directly to 7S RNA and mediates binding of the 54 kDa subunit of the SRP. The chain is Signal recognition particle 19 kDa protein from Methanococcus maripaludis (strain C7 / ATCC BAA-1331).